Consider the following 361-residue polypeptide: Peptide chain release factor 1 (361 aa).

Glutamine 235 carries the post-translational modification N5-methylglutamine. Residues 287–309 (QKEASAMRSAQVGSGDRSERIRT) are disordered.

This sequence belongs to the prokaryotic/mitochondrial release factor family. Methylated by PrmC. Methylation increases the termination efficiency of RF1.

It localises to the cytoplasm. Functionally, peptide chain release factor 1 directs the termination of translation in response to the peptide chain termination codons UAG and UAA. In Chlamydia caviae (strain ATCC VR-813 / DSM 19441 / 03DC25 / GPIC) (Chlamydophila caviae), this protein is Peptide chain release factor 1.